The primary structure comprises 411 residues: Probable indole-3-pyruvate monooxygenase YUCCA4 (411 aa).

21–26 (GAGPSG) lines the FAD pocket. An NADP(+)-binding site is contributed by 183 to 188 (GCGNSG).

The protein belongs to the FMO family. FAD serves as cofactor. As to expression, expressed in leaves, stems, flowers, buds and siliques. Detected in the apical gynoecium and in the developing ovules.

It is found in the cytoplasm. The protein resides in the endoplasmic reticulum membrane. It carries out the reaction indole-3-pyruvate + NADPH + O2 + H(+) = (indol-3-yl)acetate + CO2 + NADP(+) + H2O. It functions in the pathway plant hormone metabolism; auxin biosynthesis. In terms of biological role, involved in auxin biosynthesis. Both isoforms are catalitically active. Involved during embryogenesis and seedling development. Required for the formation of floral organs and vascular tissues. Belongs to the set of redundant YUCCA genes probably responsible for auxin biosynthesis in shoots. The polypeptide is Probable indole-3-pyruvate monooxygenase YUCCA4 (YUC4) (Arabidopsis thaliana (Mouse-ear cress)).